The sequence spans 445 residues: Rab GDP dissociation inhibitor beta (445 aa).

Methionine 1 is modified (N-acetylmethionine). Lysine 57 bears the N6-succinyllysine mark. An N6-acetyllysine modification is found at lysine 112. Serine 130 carries the post-translational modification Phosphoserine. At lysine 269 the chain carries N6-acetyllysine. The residue at position 382 (serine 382) is a Phosphoserine.

Belongs to the Rab GDI family. As to quaternary structure, interacts with RHOH. Interacts with the GDP-bound inactive forms of RAB3A, RAB3B, RAB3C, RAB5A, RAB5B, RAB5C, RAB8A, RAB8B, RAB10, RAB12, RAB35, and RAB43; binds RAB3D to a lesser extent. Interacts with DZIP1; this interaction negatively regulates the interaction of GDI2 with GDP-bound RAB8A. Ubiquitously expressed.

The protein resides in the cytoplasm. Its subcellular location is the membrane. It is found in the golgi apparatus. The protein localises to the trans-Golgi network. Functionally, GDP-dissociation inhibitor preventing the GDP to GTP exchange of most Rab proteins. By keeping these small GTPases in their inactive GDP-bound form regulates intracellular membrane trafficking. Negatively regulates protein transport to the cilium and ciliogenesis through the inhibition of RAB8A. This is Rab GDP dissociation inhibitor beta (Gdi2) from Rattus norvegicus (Rat).